Reading from the N-terminus, the 208-residue chain is Thiamine-phosphate synthase (208 aa).

4-amino-2-methyl-5-(diphosphooxymethyl)pyrimidine-binding positions include 37-41 (QYREK) and Asn-73. Residues Asp-74 and Asp-93 each coordinate Mg(2+). Residue Ser-112 coordinates 4-amino-2-methyl-5-(diphosphooxymethyl)pyrimidine. Residue 139–141 (TIS) participates in 2-[(2R,5Z)-2-carboxy-4-methylthiazol-5(2H)-ylidene]ethyl phosphate binding. Residue Lys-142 coordinates 4-amino-2-methyl-5-(diphosphooxymethyl)pyrimidine. Residues Gly-171 and 191–192 (IS) contribute to the 2-[(2R,5Z)-2-carboxy-4-methylthiazol-5(2H)-ylidene]ethyl phosphate site.

It belongs to the thiamine-phosphate synthase family. Mg(2+) serves as cofactor.

The enzyme catalyses 2-[(2R,5Z)-2-carboxy-4-methylthiazol-5(2H)-ylidene]ethyl phosphate + 4-amino-2-methyl-5-(diphosphooxymethyl)pyrimidine + 2 H(+) = thiamine phosphate + CO2 + diphosphate. It catalyses the reaction 2-(2-carboxy-4-methylthiazol-5-yl)ethyl phosphate + 4-amino-2-methyl-5-(diphosphooxymethyl)pyrimidine + 2 H(+) = thiamine phosphate + CO2 + diphosphate. It carries out the reaction 4-methyl-5-(2-phosphooxyethyl)-thiazole + 4-amino-2-methyl-5-(diphosphooxymethyl)pyrimidine + H(+) = thiamine phosphate + diphosphate. Its pathway is cofactor biosynthesis; thiamine diphosphate biosynthesis; thiamine phosphate from 4-amino-2-methyl-5-diphosphomethylpyrimidine and 4-methyl-5-(2-phosphoethyl)-thiazole: step 1/1. In terms of biological role, condenses 4-methyl-5-(beta-hydroxyethyl)thiazole monophosphate (THZ-P) and 2-methyl-4-amino-5-hydroxymethyl pyrimidine pyrophosphate (HMP-PP) to form thiamine monophosphate (TMP). This is Thiamine-phosphate synthase from Listeria welshimeri serovar 6b (strain ATCC 35897 / DSM 20650 / CCUG 15529 / CIP 8149 / NCTC 11857 / SLCC 5334 / V8).